The primary structure comprises 361 residues: Phospho-N-acetylmuramoyl-pentapeptide-transferase (361 aa).

10 helical membrane passes run 27–47 (GALF…ISLL), 72–92 (TPTM…LLWA), 99–119 (VWIT…DDYL), 139–159 (ALIA…GLAY), 169–189 (AIVN…VGAG), 200–220 (GLAI…AYLV), 240–260 (LAVV…FNAP), 264–284 (IFMG…VAVA), 289–309 (IVLA…IIQV), and 338–358 (QVVI…LATL).

The protein belongs to the glycosyltransferase 4 family. MraY subfamily. Mg(2+) serves as cofactor.

It is found in the cell inner membrane. It carries out the reaction UDP-N-acetyl-alpha-D-muramoyl-L-alanyl-gamma-D-glutamyl-meso-2,6-diaminopimeloyl-D-alanyl-D-alanine + di-trans,octa-cis-undecaprenyl phosphate = di-trans,octa-cis-undecaprenyl diphospho-N-acetyl-alpha-D-muramoyl-L-alanyl-D-glutamyl-meso-2,6-diaminopimeloyl-D-alanyl-D-alanine + UMP. The protein operates within cell wall biogenesis; peptidoglycan biosynthesis. Its function is as follows. Catalyzes the initial step of the lipid cycle reactions in the biosynthesis of the cell wall peptidoglycan: transfers peptidoglycan precursor phospho-MurNAc-pentapeptide from UDP-MurNAc-pentapeptide onto the lipid carrier undecaprenyl phosphate, yielding undecaprenyl-pyrophosphoryl-MurNAc-pentapeptide, known as lipid I. This is Phospho-N-acetylmuramoyl-pentapeptide-transferase from Methylobacterium nodulans (strain LMG 21967 / CNCM I-2342 / ORS 2060).